We begin with the raw amino-acid sequence, 275 residues long: Putative phosphoenolpyruvate synthase regulatory protein (275 aa).

Residue 153–160 (GVSRTGKT) participates in ADP binding.

The protein belongs to the pyruvate, phosphate/water dikinase regulatory protein family. PSRP subfamily.

The catalysed reaction is [pyruvate, water dikinase] + ADP = [pyruvate, water dikinase]-phosphate + AMP + H(+). It carries out the reaction [pyruvate, water dikinase]-phosphate + phosphate + H(+) = [pyruvate, water dikinase] + diphosphate. Functionally, bifunctional serine/threonine kinase and phosphorylase involved in the regulation of the phosphoenolpyruvate synthase (PEPS) by catalyzing its phosphorylation/dephosphorylation. The protein is Putative phosphoenolpyruvate synthase regulatory protein of Nitrosomonas europaea (strain ATCC 19718 / CIP 103999 / KCTC 2705 / NBRC 14298).